The following is a 556-amino-acid chain: 2-isopropylmalate synthase (556 aa).

In terms of domain architecture, Pyruvate carboxyltransferase spans 33 to 307; sequence PIWLSTDLRD…DPQLDFSDID (275 aa). Mg(2+) contacts are provided by aspartate 42, histidine 246, histidine 248, and asparagine 282. The interval 439–556 is regulatory domain; the sequence is ASAPYALKGH…ALSQAESRAA (118 aa).

This sequence belongs to the alpha-IPM synthase/homocitrate synthase family. LeuA type 2 subfamily. In terms of assembly, homodimer. Requires Mg(2+) as cofactor.

Its subcellular location is the cytoplasm. It catalyses the reaction 3-methyl-2-oxobutanoate + acetyl-CoA + H2O = (2S)-2-isopropylmalate + CoA + H(+). It functions in the pathway amino-acid biosynthesis; L-leucine biosynthesis; L-leucine from 3-methyl-2-oxobutanoate: step 1/4. Functionally, catalyzes the condensation of the acetyl group of acetyl-CoA with 3-methyl-2-oxobutanoate (2-ketoisovalerate) to form 3-carboxy-3-hydroxy-4-methylpentanoate (2-isopropylmalate). The sequence is that of 2-isopropylmalate synthase from Ectopseudomonas mendocina (strain ymp) (Pseudomonas mendocina).